We begin with the raw amino-acid sequence, 278 residues long: E3 ubiquitin-protein ligase MARCHF5 (278 aa).

The RING-CH-type zinc-finger motif lies at 6 to 75 (LQQMLDRSCW…PQCNAEYLIV (70 aa)). Positions 14, 17, 33, 35, 43, 46, 65, and 68 each coordinate Zn(2+). Transmembrane regions (helical) follow at residues 99 to 119 (FAAAGIMVGSIYWTAVTYGAV), 139 to 159 (PLFLLIGLPTIPVMLILGKMI), 209 to 229 (ILCGALVFPTIATIVGKLMFS), and 238 to 258 (TILGGIAFVAIKGAFKVYFKQ).

In terms of assembly, monomer and homodimer. Interacts with MFN1, MFN2, DNM1L and FIS1. Post-translationally, autoubiquitinated leading to degradation (short half-life).

It localises to the mitochondrion outer membrane. The catalysed reaction is S-ubiquitinyl-[E2 ubiquitin-conjugating enzyme]-L-cysteine + [acceptor protein]-L-lysine = [E2 ubiquitin-conjugating enzyme]-L-cysteine + N(6)-ubiquitinyl-[acceptor protein]-L-lysine.. The protein operates within protein modification; protein ubiquitination. Functionally, mitochondrial E3 ubiquitin-protein ligase that plays a crucial role in the control of mitochondrial morphology by acting as a positive regulator of mitochondrial fission and as an important regulator of immune response. Plays a crucial role in maintaining mitochondrial homeostasis by regulating the dynamics of mitochondria through the ubiquitination of key proteins involved in fission and fusion such as FIS1, DNM1L and MFN1. Acts as a critical determinant of mitotic apoptosis through both MCL1-dependent and -independent pathways. Turns off persistent immune signaling by degrading oligomeric complexes of retinoic acid-inducible gene I/DDX58 and mitochondrial antiviral-signaling protein/MAVS formed upon RNA virus infection. Promotes STING-mediated type-I interferon production via 'Lys-63'-linked ubiquitination of STING1 thereby preserving its activity and preventing the formation of inactive STING1 polymers. Plays also an essential role in the formation of PEX3-containing vesicles in the de novo biogenesis of peroxisomes from mitochondria. Acts as a regulator of NLRP3 inflammasome activation on the mitochondria by mediating the 'Lys-27'-linked polyubiquitination of NLRP3, positively regulating the NLRP3-NEK7 complex formation and NLRP3 oligomerization. This is E3 ubiquitin-protein ligase MARCHF5 (MARCHF5) from Bos taurus (Bovine).